Here is a 150-residue protein sequence, read N- to C-terminus: Large ribosomal subunit protein bL9 (150 aa).

The protein belongs to the bacterial ribosomal protein bL9 family.

Functionally, binds to the 23S rRNA. The chain is Large ribosomal subunit protein bL9 from Latilactobacillus sakei subsp. sakei (strain 23K) (Lactobacillus sakei subsp. sakei).